Consider the following 424-residue polypeptide: MLDLKYVRANLDAVKTALANRNQETLLAGFEDLEAGRRTVLAEVEELRRKRNEVSGTIAVMKREGKDAADLMADMKEVSGKIKDLESGLKEKEEALNELLMRIPNIPHESVPVGKDENDNVEVKRRGEPRNFDFEPQAHWDIGEGLGILDFERAARITGSRFPLYFGDGALMERALINFMLMTHTTRHGYKEVLPPFIVNRKTMTGTGQLPKFEEDLFKLEGWEYFLIPTAEVPVTNIHAEEILEEEALPLYYTAFTPCFRSEAGSAGKDTRGLIRQHQFNKVEMVKFSHPDNSYDELEGMLQNAETILQELGLPYRVLNLCTGDIGFGAAKTYDLEVWMPQQGVYREISSCSNCEDFQARRANIRFKSKGKKGTSHVHTLNGSGLAVGRSLAAILENYQQADGSVIIPEVLRPFMGGREVIEK.

230–232 (TAE) is a binding site for L-serine. Position 261-263 (261-263 (RSE)) interacts with ATP. Glutamate 284 serves as a coordination point for L-serine. 348–351 (EISS) contacts ATP. Serine 384 is an L-serine binding site.

It belongs to the class-II aminoacyl-tRNA synthetase family. Type-1 seryl-tRNA synthetase subfamily. In terms of assembly, homodimer. The tRNA molecule binds across the dimer.

Its subcellular location is the cytoplasm. The enzyme catalyses tRNA(Ser) + L-serine + ATP = L-seryl-tRNA(Ser) + AMP + diphosphate + H(+). It carries out the reaction tRNA(Sec) + L-serine + ATP = L-seryl-tRNA(Sec) + AMP + diphosphate + H(+). Its pathway is aminoacyl-tRNA biosynthesis; selenocysteinyl-tRNA(Sec) biosynthesis; L-seryl-tRNA(Sec) from L-serine and tRNA(Sec): step 1/1. In terms of biological role, catalyzes the attachment of serine to tRNA(Ser). Is also able to aminoacylate tRNA(Sec) with serine, to form the misacylated tRNA L-seryl-tRNA(Sec), which will be further converted into selenocysteinyl-tRNA(Sec). The sequence is that of Serine--tRNA ligase from Desulfatibacillum aliphaticivorans.